The chain runs to 362 residues: MIDKLEDVERRFERLTADLSNPDVLADSARLQKVSKERAGLEKLVEAFRTYRKVLADLSEVEAWLGSSDADEKAFARESLPGLKEQRDELEASLKILLLPKDPNDEKNVILEIRAGAGGDEAALFAEEVMQMYLRYADRRGWKADILDMSPGNAGGVKDATVTLSGDAVFSSMKYESGVHRVQRVPATETQGRIHTSTITVSVMPEAEDVDVQVNPADIEMQVMRSTGSGGQSVNTTDSAVRLIHHPTGIVVKCQQEKSQLKNRTMAMRMLRAKLYDIEQERIRNERDSARRAQVGTGDRSEKIRTYNFPQDRLTDHRIGLTVHNLPGVMAGDVEDVITACRTFYQAEALKAQTAGGPKPSA.

The residue at position 232 (Gln-232) is an N5-methylglutamine.

The protein belongs to the prokaryotic/mitochondrial release factor family. In terms of processing, methylated by PrmC. Methylation increases the termination efficiency of RF1.

The protein resides in the cytoplasm. In terms of biological role, peptide chain release factor 1 directs the termination of translation in response to the peptide chain termination codons UAG and UAA. The protein is Peptide chain release factor 1 of Myxococcus xanthus.